Consider the following 83-residue polypeptide: Small ribosomal subunit protein bS18 (83 aa).

Belongs to the bacterial ribosomal protein bS18 family. Part of the 30S ribosomal subunit. Forms a tight heterodimer with protein bS6.

Binds as a heterodimer with protein bS6 to the central domain of the 16S rRNA, where it helps stabilize the platform of the 30S subunit. The protein is Small ribosomal subunit protein bS18 of Tropheryma whipplei (strain TW08/27) (Whipple's bacillus).